The chain runs to 252 residues: Probable oligoribonuclease (252 aa).

Residues 81–241 (VWIDCEMTGL…ALSDILESIG (161 aa)) form the Exonuclease domain. The active site involves Tyr-202.

It belongs to the oligoribonuclease family.

The protein localises to the cytoplasm. It is found in the nucleus. 3'-to-5' exoribonuclease specific for small oligoribonucleotides. This chain is Probable oligoribonuclease (rex2), found in Schizosaccharomyces pombe (strain 972 / ATCC 24843) (Fission yeast).